The following is a 205-amino-acid chain: Octanoyltransferase (205 aa).

One can recognise a BPL/LPL catalytic domain in the interval 30–205; it reads NSADELVWLL…ILKKEFYKIF (176 aa). Substrate is bound by residues 68 to 75, 140 to 142, and 153 to 155; these read RGGKHTYH, AFG, and GIA. Catalysis depends on Cys171, which acts as the Acyl-thioester intermediate.

Belongs to the LipB family.

Its subcellular location is the cytoplasm. The enzyme catalyses octanoyl-[ACP] + L-lysyl-[protein] = N(6)-octanoyl-L-lysyl-[protein] + holo-[ACP] + H(+). It functions in the pathway protein modification; protein lipoylation via endogenous pathway; protein N(6)-(lipoyl)lysine from octanoyl-[acyl-carrier-protein]: step 1/2. Functionally, catalyzes the transfer of endogenously produced octanoic acid from octanoyl-acyl-carrier-protein onto the lipoyl domains of lipoate-dependent enzymes. Lipoyl-ACP can also act as a substrate although octanoyl-ACP is likely to be the physiological substrate. The protein is Octanoyltransferase of Wolbachia pipientis wMel.